A 440-amino-acid chain; its full sequence is Chromosome partition protein MukF (440 aa).

A leucine-zipper region spans residues 208 to 236; sequence LSETSGTLRELQDTLEAAGDKLQANLLRI.

It belongs to the MukF family. Interacts, and probably forms a ternary complex, with MukE and MukB via its C-terminal region. The complex formation is stimulated by calcium or magnesium. It is required for an interaction between MukE and MukB.

The protein localises to the cytoplasm. Its subcellular location is the nucleoid. Involved in chromosome condensation, segregation and cell cycle progression. May participate in facilitating chromosome segregation by condensation DNA from both sides of a centrally located replisome during cell division. Not required for mini-F plasmid partitioning. Probably acts via its interaction with MukB and MukE. Overexpression results in anucleate cells. It has a calcium binding activity. This is Chromosome partition protein MukF from Escherichia coli O9:H4 (strain HS).